A 443-amino-acid polypeptide reads, in one-letter code: Histidinol dehydrogenase (443 aa).

The NAD(+) site is built by tyrosine 141, glutamine 203, and asparagine 226. The substrate site is built by serine 249, glutamine 271, and histidine 274. Zn(2+) is bound by residues glutamine 271 and histidine 274. Residues glutamate 339 and histidine 340 each act as proton acceptor in the active site. Residues histidine 340, aspartate 373, glutamate 427, and histidine 432 each contribute to the substrate site. Position 373 (aspartate 373) interacts with Zn(2+). Zn(2+) is bound at residue histidine 432.

It belongs to the histidinol dehydrogenase family. Requires Zn(2+) as cofactor.

The catalysed reaction is L-histidinol + 2 NAD(+) + H2O = L-histidine + 2 NADH + 3 H(+). It participates in amino-acid biosynthesis; L-histidine biosynthesis; L-histidine from 5-phospho-alpha-D-ribose 1-diphosphate: step 9/9. In terms of biological role, catalyzes the sequential NAD-dependent oxidations of L-histidinol to L-histidinaldehyde and then to L-histidine. This chain is Histidinol dehydrogenase, found in Chlorobium luteolum (strain DSM 273 / BCRC 81028 / 2530) (Pelodictyon luteolum).